We begin with the raw amino-acid sequence, 595 residues long: Sucrose transport protein SUT4 (595 aa).

At 1 to 61 (MDSAAGGGGL…PAARTTTTRK (61 aa)) the chain is on the cytoplasmic side. The tract at residues 29-55 (SLNGGTPRGGSPKDPDATHQQGPPAAR) is disordered. A helical transmembrane segment spans residues 62-82 (LVLACMVAAGVQFGWALQLSL). Over 83–97 (LTPYIQTLGIDHAMA) the chain is Extracellular. The helical transmembrane segment at 98 to 118 (SFIWLCGPITGFVVQPCVGVW) threads the bilayer. The Cytoplasmic segment spans residues 119–130 (SDKCRSKYGRRR). Residues 131-151 (PFILAGCLMICFAVTLIGFSA) form a helical membrane-spanning segment. The Extracellular segment spans residues 152–173 (DLGYILGDTTEHCSTYKGSRFR). Residues 174–194 (AAIIFVLGFWMLDLANNTVQG) form a helical membrane-spanning segment. The Cytoplasmic segment spans residues 195 to 213 (PARALLADLSGPDQCNSAN). The helical transmembrane segment at 214-234 (AIFCTWMAVGNVLGFSSGASG) threads the bilayer. Over 235-256 (NWHKWFPFLMTRACCEACSNLK) the chain is Extracellular. A helical transmembrane segment spans residues 257–277 (AAFLVAVVFLLFCMSVTLYFA). Topologically, residues 278–365 (EEIPLEPTDA…LTSMRHLPPG (88 aa)) are cytoplasmic. The segment at 291-340 (SDSAPLLNGSRDDNNASNEPRNGALPNGHTDGSNVPANSNAEDSNSNREN) is disordered. A compositionally biased stretch (polar residues) spans 320-334 (TDGSNVPANSNAEDS). A helical membrane pass occupies residues 366-386 (MYSVLLVMALTWLSWFPFFLF). Over 387–417 (DTDWMGREVYHGDPNGNLSERKAYDNGVREG) the chain is Extracellular. N-linked (GlcNAc...) asparagine glycosylation is present at asparagine 403. The chain crosses the membrane as a helical span at residues 418-438 (AFGLLLNSVVLGIGSFLVDPL). Topologically, residues 439-447 (CRLMGARLV) are cytoplasmic. The helical transmembrane segment at 448–468 (WAISNFTVFICMLATAILSWI) threads the bilayer. The Extracellular segment spans residues 469–491 (SFDLYSSKLHHIIGANKTVKNSA). Residue asparagine 484 is glycosylated (N-linked (GlcNAc...) asparagine). A helical membrane pass occupies residues 492–512 (LIVFSLLGLPLSITYSVPFSV). Residues 513-525 (TAELTAGTGGGQG) are Cytoplasmic-facing. A helical transmembrane segment spans residues 526 to 546 (LATGVLNLAIVVPQIVVSLGA). The Extracellular portion of the chain corresponds to 547–556 (GPWDALFGGG). Residues 557-577 (NVPAFALASVFSLGAGVLAVL) form a helical membrane-spanning segment. Residues 578-595 (KLPKLPNSYRSAGFHGFG) are Cytoplasmic-facing.

Belongs to the glycoside-pentoside-hexuronide (GPH) cation symporter transporter (TC 2.A.2.4) family. Homodimer.

The protein localises to the cell membrane. It participates in glycan biosynthesis; sucrose metabolism. Functionally, responsible for the transport of sucrose into the cell, with the concomitant uptake of protons (symport system). May also transport other glucosides. This chain is Sucrose transport protein SUT4 (SUT4), found in Oryza sativa subsp. indica (Rice).